The primary structure comprises 541 residues: Putative nucleobase-ascorbate transporter 10 (541 aa).

A run of 12 helical transmembrane segments spans residues 52–72 (LLSL…MGGG), 79–99 (VIQT…FFGT), 101–121 (LPVI…IIYS), 141–161 (IQGA…LGVW), 173–193 (IAPL…PLLA), 196–216 (VEVG…LPRF), 235–255 (GMIL…SSGV), 299–319 (SFAM…LFYA), 376–396 (RVIQ…KFGA), 397–417 (FFAS…LCFV), 433–453 (FNIK…PQYF), and 476–496 (VIFM…DCTL).

This sequence belongs to the nucleobase:cation symporter-2 (NCS2) (TC 2.A.40) family.

Its subcellular location is the membrane. This Arabidopsis thaliana (Mouse-ear cress) protein is Putative nucleobase-ascorbate transporter 10 (NAT10).